A 206-amino-acid chain; its full sequence is MAIFLIDLPPSDMERRLGDALTVYVDAMRYPRGTETLRAPMWLEHIRRRGWQAVAAVEVTAAEQAEAADTTALPSAAELSNAPMLGVAYGYPGAPGQWWQQQVVLGLQRSGFPRLAIARLMTSYFELTELHILPRAQGRGLGEALARRLLAGRDEDNVLLSTPETNGEDNRAWRLYRRLGFTDIIRGYHFAGDPRAFAILGRTLPL.

Positions 44–205 (EHIRRRGWQA…AFAILGRTLP (162 aa)) constitute an N-acetyltransferase domain. Y176 (proton donor) is an active-site residue.

The protein belongs to the acetyltransferase family.

The enzyme catalyses L-lysyl-[protein] + acetyl-CoA = N(6)-acetyl-L-lysyl-[protein] + CoA + H(+). The catalysed reaction is propanoyl-CoA + L-lysyl-[protein] = N(6)-propanoyl-L-lysyl-[protein] + CoA + H(+). It carries out the reaction succinyl-CoA + L-lysyl-[protein] = N(6)-succinyl-L-lysyl-[protein] + CoA + H(+). Its function is as follows. Acetyltransferase involved in the post-translational regulation of the central metabolic enzyme isocitrate dehydrogenase 1 (ICDH-1) through lysine acetylation. Catalyzes the acetylation of ICDH-1 at Lys-30 and Lys-129, using acetyl-CoA as a donor, leading to a reduction of ICDH-1 enzyme activity. Can also use propionyl-CoA and succinyl-CoA as donors. Cannot act on the isocitrate dehydrogenase 2 (ICDH-2). Might play a role in regulating the TCA cycle and methylcitrate cycle when M.tuberculosis utilizes fatty acid as carbon source. In addition, it can acetylate the amino group of isoniazid (INH), one of the first-line drugs used for the treatment of tuberculosis, thereby canceling out the drug toxicity. Acts by catalyzing the transfer of an acetyl group from acetyl-CoA to INH. Following acetylation, INH is broken down into isonicotinic acid and acetylhydrazine. M.smegmatis and M.tuberculosis H37Ra strains overexpressing Rv2170 are resistant to INH. Has little or no acetyltransferase activity with other antibiotics such as streptomycin, neomycin, kanamycin, amikacin, apramycin and gentamicin. The sequence is that of GCN5-like protein acetyltransferase Rv2170 from Mycobacterium tuberculosis (strain ATCC 25618 / H37Rv).